We begin with the raw amino-acid sequence, 325 residues long: Tetraacyldisaccharide 4'-kinase (325 aa).

Thr55–Thr62 serves as a coordination point for ATP.

The protein belongs to the LpxK family.

The enzyme catalyses a lipid A disaccharide + ATP = a lipid IVA + ADP + H(+). It participates in glycolipid biosynthesis; lipid IV(A) biosynthesis; lipid IV(A) from (3R)-3-hydroxytetradecanoyl-[acyl-carrier-protein] and UDP-N-acetyl-alpha-D-glucosamine: step 6/6. In terms of biological role, transfers the gamma-phosphate of ATP to the 4'-position of a tetraacyldisaccharide 1-phosphate intermediate (termed DS-1-P) to form tetraacyldisaccharide 1,4'-bis-phosphate (lipid IVA). The sequence is that of Tetraacyldisaccharide 4'-kinase from Salmonella typhi.